The primary structure comprises 211 residues: MNKTKRIEILTRLREQNPHPTTELQYNSPFELLIAVILSAQATDKGVNKATEKLFPVANTPQAILDLGLDGLKSYIKTIGLFNSKAENIIKTCRDLIEKHNGEVPENREALEALAGVGRKTANVVLNTAFGHPTIAVDTHIFRVCNRTNFAAGKDVVKVEEKLLKVVPNEFKVDVHHWLILHGRYTCIARKPRCGSCIIEDLCEYKEKVEF.

The 20-residue stretch at 108 to 127 (REALEALAGVGRKTANVVLN) folds into the HhH domain. The [4Fe-4S] cluster site is built by C187, C194, C197, and C203.

It belongs to the Nth/MutY family. [4Fe-4S] cluster serves as cofactor.

It carries out the reaction 2'-deoxyribonucleotide-(2'-deoxyribose 5'-phosphate)-2'-deoxyribonucleotide-DNA = a 3'-end 2'-deoxyribonucleotide-(2,3-dehydro-2,3-deoxyribose 5'-phosphate)-DNA + a 5'-end 5'-phospho-2'-deoxyribonucleoside-DNA + H(+). DNA repair enzyme that has both DNA N-glycosylase activity and AP-lyase activity. The DNA N-glycosylase activity releases various damaged pyrimidines from DNA by cleaving the N-glycosidic bond, leaving an AP (apurinic/apyrimidinic) site. The AP-lyase activity cleaves the phosphodiester bond 3' to the AP site by a beta-elimination, leaving a 3'-terminal unsaturated sugar and a product with a terminal 5'-phosphate. The polypeptide is Endonuclease III (Haemophilus influenzae (strain ATCC 51907 / DSM 11121 / KW20 / Rd)).